A 429-amino-acid polypeptide reads, in one-letter code: Glutamate-1-semialdehyde 2,1-aminomutase (429 aa).

Lys-270 is subject to N6-(pyridoxal phosphate)lysine.

Belongs to the class-III pyridoxal-phosphate-dependent aminotransferase family. HemL subfamily. As to quaternary structure, homodimer. Requires pyridoxal 5'-phosphate as cofactor.

The protein resides in the cytoplasm. It catalyses the reaction (S)-4-amino-5-oxopentanoate = 5-aminolevulinate. It functions in the pathway porphyrin-containing compound metabolism; protoporphyrin-IX biosynthesis; 5-aminolevulinate from L-glutamyl-tRNA(Glu): step 2/2. The sequence is that of Glutamate-1-semialdehyde 2,1-aminomutase from Cupriavidus pinatubonensis (strain JMP 134 / LMG 1197) (Cupriavidus necator (strain JMP 134)).